Consider the following 471-residue polypeptide: UDP-N-acetylmuramate--L-alanine ligase (471 aa).

Residue 114 to 120 participates in ATP binding; the sequence is GTHGKTT.

The protein belongs to the MurCDEF family.

It localises to the cytoplasm. It carries out the reaction UDP-N-acetyl-alpha-D-muramate + L-alanine + ATP = UDP-N-acetyl-alpha-D-muramoyl-L-alanine + ADP + phosphate + H(+). The protein operates within cell wall biogenesis; peptidoglycan biosynthesis. Cell wall formation. In Methylobacterium sp. (strain 4-46), this protein is UDP-N-acetylmuramate--L-alanine ligase.